The chain runs to 419 residues: UDP-N-acetylglucosamine 1-carboxyvinyltransferase (419 aa).

A phosphoenolpyruvate-binding site is contributed by 22–23 (KN). Residue R92 coordinates UDP-N-acetyl-alpha-D-glucosamine. Residue C116 is the Proton donor of the active site. At C116 the chain carries 2-(S-cysteinyl)pyruvic acid O-phosphothioketal. Residues 121–125 (RPVDQ), D306, and I328 each bind UDP-N-acetyl-alpha-D-glucosamine.

Belongs to the EPSP synthase family. MurA subfamily.

It is found in the cytoplasm. The enzyme catalyses phosphoenolpyruvate + UDP-N-acetyl-alpha-D-glucosamine = UDP-N-acetyl-3-O-(1-carboxyvinyl)-alpha-D-glucosamine + phosphate. Its pathway is cell wall biogenesis; peptidoglycan biosynthesis. In terms of biological role, cell wall formation. Adds enolpyruvyl to UDP-N-acetylglucosamine. Target for the antibiotic phosphomycin. The polypeptide is UDP-N-acetylglucosamine 1-carboxyvinyltransferase (Acinetobacter guillouiae (Acinetobacter genomosp. 11)).